The following is a 927-amino-acid chain: 2-oxoadipate dehydrogenase complex component E1 (927 aa).

It belongs to the alpha-ketoglutarate dehydrogenase family. In terms of assembly, the 2-oxoadipate dehydrogenase complex is composed of OADH (2-oxoadipate dehydrogenase; E1a), DLST (dihydrolipoamide succinyltransferase; E2) and DLD (dihydrolipoamide dehydrogenase; E3). E1a functional unit is a dimer. Thiamine diphosphate serves as cofactor.

The protein resides in the mitochondrion. The enzyme catalyses N(6)-[(R)-lipoyl]-L-lysyl-[protein] + 2-oxoadipate + H(+) = N(6)-[(R)-S(8)-glutaryldihydrolipoyl]-L-lysyl-[protein] + CO2. The protein operates within amino-acid degradation. 2-oxoadipate dehydrogenase (E1a) component of the 2-oxoadipate dehydrogenase complex (OADHC). Participates in the first step, rate limiting for the overall conversion of 2-oxoadipate (alpha-ketoadipate) to glutaryl-CoA and CO(2) catalyzed by the whole OADHC. Catalyzes the irreversible decarboxylation of 2-oxoadipate via the thiamine diphosphate (ThDP) cofactor and subsequent transfer of the decarboxylated acyl intermediate on an oxidized dihydrolipoyl group that is covalently amidated to the E2 enzyme (dihydrolipoyllysine-residue succinyltransferase or DLST). Can catalyze the decarboxylation of 2-oxoglutarate in vitro, but at a much lower rate than 2-oxoadipate. Responsible for the last step of L-lysine, L-hydroxylysine and L-tryptophan catabolism with the common product being 2-oxoadipate. The polypeptide is 2-oxoadipate dehydrogenase complex component E1 (dhtkd1) (Xenopus laevis (African clawed frog)).